We begin with the raw amino-acid sequence, 392 residues long: INCREASED PETAL GROWTH ANISOTROPY 1-like protein 1 (392 aa).

Positions 11-52 (LLRLVKELQAYLVRNDKLEKENHELRQEVARLRAQVSNLKSH) form a coiled coil. Polar residues-rich tracts occupy residues 65–76 (QSSYDGSNTDGS) and 100–109 (PTIQGQSTAT). Residues 65–128 (QSSYDGSNTD…SKRTLGKRSV (64 aa)) are disordered. Positions 269-299 (KDSLTQALQRIQSLQDRLEESVNNTEKMRDS) form a coiled coil.

It belongs to the IPGA1 family.

It is found in the cytoplasm. Its subcellular location is the cytoskeleton. In terms of biological role, microtubule-associated protein probably involved in the regulation of microtubule organization. The chain is INCREASED PETAL GROWTH ANISOTROPY 1-like protein 1 from Arabidopsis thaliana (Mouse-ear cress).